We begin with the raw amino-acid sequence, 323 residues long: MFNFANVYQQIAQHPQLQLWLNTLPQQLTDWQAKQHGDLDRWMRNLKKIPVGQPEVIDLKNAVAAHNHQPLAQGEQKKLEAVLKTFHPWRKGPYHLHGIHIDTEWRSDWKWDRLLPHISPLKNRLVLDVGCGNGYHMWRMLGEGAQQVFGIDPSELFLIQFEAVRKLLGDDQRVHLLPLGIEQMPELNAFDTVFSMGVLYHRRSPLDHLLQLKNQLVAGGELILETLVVEGDEHTVLVPFDRYAQMRNVYFFPSALALKVWLEKTGFVDVRIVDENITSLGEQRTTEWMTHNSLPDYVDPQDPSKTIEGYPAPRRAILIAKKP.

Residues Lys91, Trp105, Lys110, Gly130, 152–154 (DPS), 181–182 (IE), Met196, Tyr200, and Arg315 contribute to the carboxy-S-adenosyl-L-methionine site.

The protein belongs to the class I-like SAM-binding methyltransferase superfamily. CmoB family. As to quaternary structure, homotetramer.

The enzyme catalyses carboxy-S-adenosyl-L-methionine + 5-hydroxyuridine(34) in tRNA = 5-carboxymethoxyuridine(34) in tRNA + S-adenosyl-L-homocysteine + H(+). In terms of biological role, catalyzes carboxymethyl transfer from carboxy-S-adenosyl-L-methionine (Cx-SAM) to 5-hydroxyuridine (ho5U) to form 5-carboxymethoxyuridine (cmo5U) at position 34 in tRNAs. The chain is tRNA U34 carboxymethyltransferase from Vibrio cholerae serotype O1 (strain ATCC 39541 / Classical Ogawa 395 / O395).